Reading from the N-terminus, the 917-residue chain is MKIRSRFEEMQSELVPVSMSETEHIASISSDATTEKTSELRDDSCISVSGDESSRLETGAELLSLDSDRILCQTNEHCSQIEVQESHIPDCGSGENSCANTDTCPEDSGQIDDFPGGDFTEQVSKTKEPEQTVTQILAELKSSAPAEAANPKTASASLYDTDCTRKLISEMKTVSASDDLLGEIESELLSAEFAEGHQVPNGLNKGEQALALFEKCVHSRYLQQELTVKQLIKENKNHQELILNICSEKDSLREELRKRTETEKQHMNTIKQLELRIEELNKEIKASKDQLVAQDVTAKNAIQQIHKEMAQRMDQANKKCEEARQEKEAMVMKYVRGEKEALDLRKEKETLERKLRDASKELEKNTNKIKQLSQEKGRLQQLYESKEGETTRLIREIEKLKEEMNSQVIKVKWAQNKLKAEMDSHKETKDKLKETTTKLTQAKEEAEQIRQNCQDMIKTYQESEEIKSNELDAKLRVTKGELEKQMQEKSDQLEMHHAKIKELEDLKRTFKEGMDELRTLRTKAKCLEDERLRTEDELSKYREIINRQKSEIQNLLDKVKITDQLHEQLQSGKQEIEHLKEEMESLNSLINDLQKDIEGSRKRESELLLFTEKLTSKNAQLQSESSALQSQVDNLSCTESQLQSQCQQMGQANRNLESKLLKEEELRKEEVQTLQAELSAAQTEVKALSTQVEELKDELVTQRRKHASNVKDLSKQLQQARRKLEQTENGNHDKDISSMGSRSSSSGSLNARISAEDRSPENTSSSVAVDNFPEVDKAMLIERIVRLQKAHARKNEKIEFMEDHIKQLVEEIRKKTKIIQSYVLREESGTLSSEASDFNKVHLSRRGGIMASLYTSHPADSGLTLELSLEINRKLQAVLEDTLLKNITLKENLQTLGTEIERLIKHQHELEQRTKKA.

3 disordered regions span residues 1–52 (MKIR…SGDE), 97–118 (SCAN…PGGD), and 701–769 (TQRR…SVAV). A compositionally biased stretch (basic and acidic residues) spans 33–44 (TTEKTSELRDDS). The stretch at 220–736 (RYLQQELTVK…TENGNHDKDI (517 aa)) forms a coiled coil. Residues 722 to 736 (RKLEQTENGNHDKDI) show a composition bias toward basic and acidic residues. Residues 737 to 748 (SSMGSRSSSSGS) are compositionally biased toward low complexity. S759 is subject to Phosphoserine. Coiled coils occupy residues 778 to 822 (AMLI…IQSY) and 874 to 913 (KLQA…LEQR).

Expressed in postnatal germ cells.

This is Coiled-coil domain-containing protein 186 (Ccdc186) from Mus musculus (Mouse).